Reading from the N-terminus, the 75-residue chain is Large ribosomal subunit protein bL28 (75 aa).

Residues 1–21 (MARVCQVTGKRPMSGNKRSHA) are disordered.

It belongs to the bacterial ribosomal protein bL28 family.

This is Large ribosomal subunit protein bL28 from Blochmanniella pennsylvanica (strain BPEN).